A 778-amino-acid polypeptide reads, in one-letter code: High affinity nerve growth factor receptor (778 aa).

A signal peptide spans 1–14 (WGCLRLPLPLCHAL). The Extracellular segment spans residues 15–400 (AAHCRCPASH…VETADEHTFG (386 aa)). The cysteines at positions 18 and 20 are disulfide-linked. LRR repeat units lie at residues 71–92 (DLRHLTISNSGLQYISDDAFQD) and 95–116 (RLSHVNLSFNALTSLSWKTFQH). Residues Asn100, Asn130, Asn143, Asn151, Asn194, Asn234, Asn262, Asn300, Asn320, Asn340, and Asn384 are each glycosylated (N-linked (GlcNAc...) asparagine). The LRRCT domain occupies 127–175 (NPFNCSCGIRWLQLWQNGSRAELGNQSLLCWEGSMLVALDSHPLHDCEP). Cys133 and Cys173 are disulfide-bonded. Ig-like C2-type domains are found at residues 175-262 (PPTA…VMLN) and 281-347 (WCIP…VVQN). A disulfide bridge connects residues Cys282 and Cys327. Residues 401 to 421 (VSVAVALAVFASLFLSVMLIA) form a helical membrane-spanning segment. Residues 422-778 (LNKCGHRSKF…TPPIYLDILG (357 aa)) lie on the Cytoplasmic side of the membrane. Position 479 is a phosphotyrosine; by autocatalysis (Tyr479). The Protein kinase domain occupies 493 to 763 (IVLKWELGEG…RSIQDIHSRL (271 aa)). ATP contacts are provided by residues 499-507 (LGEGAFGKV) and Lys527. The Proton acceptor role is filled by Asp633. Phosphotyrosine; by autocatalysis is present on residues Tyr659, Tyr663, Tyr664, and Tyr773.

It belongs to the protein kinase superfamily. Tyr protein kinase family. Insulin receptor subfamily. In terms of assembly, exists in a dynamic equilibrium between monomeric (low affinity) and dimeric (high affinity) structures. Homodimerization is induced by NGF dimer binding. Interacts with PTPRS. Ligand-mediated auto-phosphorylation. In terms of processing, ubiquitinated. Undergoes polyubiquitination upon activation; regulated by NGFR. Ubiquitination regulates the internalization of the receptor.

It is found in the cell membrane. The protein localises to the early endosome membrane. The protein resides in the late endosome membrane. Its subcellular location is the recycling endosome membrane. The enzyme catalyses L-tyrosyl-[protein] + ATP = O-phospho-L-tyrosyl-[protein] + ADP + H(+). The pro-survival signaling effect of NTRK1 in neurons requires its endocytosis into signaling early endosomes and its retrograde axonal transport. Receptor tyrosine kinase involved in the development and the maturation of the central and peripheral nervous systems through regulation of proliferation, differentiation and survival of sympathetic and nervous neurons. High affinity receptor for NGF which is its primary ligand, it can also bind and be activated by NTF3/neurotrophin-3. Upon dimeric NGF ligand-binding, undergoes homodimerization, autophosphorylation and activation. Recruits, phosphorylates and/or activates several downstream effectors that regulate distinct overlapping signaling cascades driving cell survival and differentiation. In absence of ligand and activation, may promote cell death, making the survival of neurons dependent on trophic factors. The chain is High affinity nerve growth factor receptor (NTRK1) from Gallus gallus (Chicken).